Reading from the N-terminus, the 1012-residue chain is Alanine--tRNA ligase, mitochondrial (1012 aa).

The transit peptide at 1–24 (MYNSAKQLQRVLTAREIRKTFLDH) directs the protein to the mitochondrion. His656, His660, Cys766, and His770 together coordinate Zn(2+).

Belongs to the class-II aminoacyl-tRNA synthetase family. Monomer. The cofactor is Zn(2+).

It localises to the mitochondrion. The enzyme catalyses tRNA(Ala) + L-alanine + ATP = L-alanyl-tRNA(Ala) + AMP + diphosphate. Catalyzes the attachment of alanine to tRNA(Ala) in a two-step reaction: alanine is first activated by ATP to form Ala-AMP and then transferred to the acceptor end of tRNA(Ala). Also edits incorrectly charged tRNA(Ala) via its editing domain. This chain is Alanine--tRNA ligase, mitochondrial, found in Drosophila melanogaster (Fruit fly).